A 1168-amino-acid chain; its full sequence is Myosin IC heavy chain (1168 aa).

In terms of domain architecture, Myosin motor spans 7–666 (HGVDDMVMLT…SVFSLEELRD (660 aa)). Position 101 to 108 (101 to 108 (GESGAGKT)) interacts with ATP. Position 311 is a phosphoserine (Ser311). Positions 542–564 (INILVATLSKCTPHYIRCIKPNE) are actin-binding. A TH1 domain is found at 704–892 (KERRRLSLER…KVSVAPGLPP (189 aa)). 3 disordered regions span residues 876–909 (DGKV…GGAS), 921–978 (ILGA…APGP), and 1036–1168 (AAAP…PPGM). Over residues 895–909 (APNIQAPQETSGGAS) the composition is skewed to polar residues. Composition is skewed to gly residues over residues 924-939 (AKGG…GGPS) and 950-959 (PGGGGGGPSP). The span at 960-978 (FGGRPSPSGPPAAASAPGP) shows a compositional bias: low complexity. Positions 976 to 1035 (PGPEQARALYDFAAENPDELTFNEGAVVTVINKSNPDWWEGELNGQRGVFPASYVELIPR) constitute an SH3 domain. Residues 1040 to 1052 (APGPSGGPRPAPP) are compositionally biased toward pro residues. Composition is skewed to gly residues over residues 1063–1083 (GGPG…GRGG) and 1090–1099 (GRAGPPGGRG). A compositionally biased stretch (low complexity) spans 1100-1112 (MPAPGGAAPRGRG). Residues 1120–1141 (GPPGGGRGGAPPPGGMRGRGGP) show a composition bias toward gly residues. The segment covering 1152–1161 (GGMMPPRGRA) has biased composition (low complexity).

Belongs to the TRAFAC class myosin-kinesin ATPase superfamily. Myosin family. Myosin I heavy chain is single-headed. Dimer of a heavy and a light chain. Inability to self-assemble into filaments.

Its function is as follows. Myosin is a protein that binds to F-actin and has ATPase activity that is activated by F-actin. This is Myosin IC heavy chain (MIC) from Acanthamoeba castellanii (Amoeba).